Consider the following 734-residue polypeptide: Photosystem I P700 chlorophyll a apoprotein A2 (734 aa).

The next 8 membrane-spanning stretches (helical) occupy residues 46–69, 135–158, 175–199, 273–291, 330–353, 369–395, 417–439, and 517–535; these read IFAS…FHVA, LYTG…LHLQ, LNHH…HVAI, MAHH…GHMY, IHFQ…QHMY, AALY…IFFI, AIKS…LYVH, and FLVH…LILV. Cys559 and Cys568 together coordinate [4Fe-4S] cluster. The next 2 helical transmembrane spans lie at 575–596 and 643–665; these read AFYL…YWHW and LSVW…MFLI. The chlorophyll a site is built by His654, Met662, and Tyr670. Trp671 contributes to the phylloquinone binding site. A helical membrane pass occupies residues 707–727; that stretch reads LVGLAHFSVGYIFTYAAFLIA.

This sequence belongs to the PsaA/PsaB family. In terms of assembly, the PsaA/B heterodimer binds the P700 chlorophyll special pair and subsequent electron acceptors. PSI consists of a core antenna complex that captures photons, and an electron transfer chain that converts photonic excitation into a charge separation. The eukaryotic PSI reaction center is composed of at least 11 subunits. Requires P700 is a chlorophyll a/chlorophyll a' dimer, A0 is one or more chlorophyll a, A1 is one or both phylloquinones and FX is a shared 4Fe-4S iron-sulfur center. as cofactor.

Its subcellular location is the plastid. It is found in the chloroplast thylakoid membrane. It carries out the reaction reduced [plastocyanin] + hnu + oxidized [2Fe-2S]-[ferredoxin] = oxidized [plastocyanin] + reduced [2Fe-2S]-[ferredoxin]. Functionally, psaA and PsaB bind P700, the primary electron donor of photosystem I (PSI), as well as the electron acceptors A0, A1 and FX. PSI is a plastocyanin-ferredoxin oxidoreductase, converting photonic excitation into a charge separation, which transfers an electron from the donor P700 chlorophyll pair to the spectroscopically characterized acceptors A0, A1, FX, FA and FB in turn. Oxidized P700 is reduced on the lumenal side of the thylakoid membrane by plastocyanin. The polypeptide is Photosystem I P700 chlorophyll a apoprotein A2 (Chloranthus spicatus (Chulantree)).